The sequence spans 266 residues: Large ribosomal subunit protein uL4 (266 aa).

The protein belongs to the universal ribosomal protein uL4 family. Part of the 50S ribosomal subunit.

Functionally, one of the primary rRNA binding proteins, this protein initially binds near the 5'-end of the 23S rRNA. It is important during the early stages of 50S assembly. It makes multiple contacts with different domains of the 23S rRNA in the assembled 50S subunit and ribosome. Its function is as follows. Forms part of the polypeptide exit tunnel. This chain is Large ribosomal subunit protein uL4, found in Sulfolobus acidocaldarius (strain ATCC 33909 / DSM 639 / JCM 8929 / NBRC 15157 / NCIMB 11770).